We begin with the raw amino-acid sequence, 872 residues long: MLSMAKRVFWPYGYGSGRASFHKIVKNINAMEEGLSALSDSELFSKTSHFKELLASGQTLDDLLVPAFAVVRETARRVLNMRHFDVQLIGGIALHRCMIAEMKTGEGKTLVATLAAYLGALEGAGVHVVTVNDYLARRDSEWMGNIYQALGMSVGCITGSSSDEQRKAAYACDVLYSTNNELGFDYLRDNMKFGRESMVQRGFNYAIVDEVDSILIDEARTPLIISGPVERDSALYGRVDSLVRALTPEDYEVEEKNRSAFLTEEGAVKVEKMLLSMGLIPVGSSLYDTENIVMMHYVSQALRAHKLFAVDKDYIVKNGNVVIIDEFTGRMMEGRRYSDGLHQALEAKERLTVNSENQTLASTTFQNYFRMYRRISGMTGTAATEADEFLGTYNLQAMQIPTNVPVRRVDMDDDVYCTEEEKFEAVIDFIVECNKRLQPTLVGTISIEKSELLSEMLTKRGIKHSVLNARYHEKEAYIIAQAGRPGAVTIATNMAGRGTDIQLGGNPEMLAKDELSGITSDEERSAKYEQLVAQTKRDRDVVVAAGGLCIVGTERHESRRIDNQLRGRSGRQGDPGLSKFFLSLEDDLLRIFGSDKVKGMLKKLGMKRGEAIQHKWISKAIERAQKKVEARNYDIRKSLLRFDDVINEQRQVVFEQRNQVLDNDTYDFAFMYHSVNQDLVSRVVKDKYYDPSPETCEPLLSEVKRIYGVELEPEKLQNLETKEQVVGYLDSFAQELLEKKAAEFVHNGENLWDFAARRVLITSLDHMWIEHLSALDSLKCGINLRSIGQKDPLNEFKIEAFTMLKHMLLKFHEMVIQKLSSMRLERDASPATQHMFRAARGGDSPFSGISRNEKCPCGSGKKFKHCHGILQL.

ATP contacts are provided by residues Gln87, 105 to 109 (GEGKT), and Asp500. Zn(2+) is bound by residues Cys855, Cys857, Cys866, and His867.

This sequence belongs to the SecA family. As to quaternary structure, monomer and homodimer. Part of the essential Sec protein translocation apparatus which comprises SecA, SecYEG and auxiliary proteins SecDF-YajC and YidC. It depends on Zn(2+) as a cofactor.

The protein localises to the cell inner membrane. It is found in the cytoplasm. It carries out the reaction ATP + H2O + cellular proteinSide 1 = ADP + phosphate + cellular proteinSide 2.. Part of the Sec protein translocase complex. Interacts with the SecYEG preprotein conducting channel. Has a central role in coupling the hydrolysis of ATP to the transfer of proteins into and across the cell membrane, serving both as a receptor for the preprotein-SecB complex and as an ATP-driven molecular motor driving the stepwise translocation of polypeptide chains across the membrane. The sequence is that of Protein translocase subunit SecA from Anaplasma marginale (strain St. Maries).